The chain runs to 318 residues: Ubiquitin-like domain-containing CTD phosphatase 1 (318 aa).

A Ubiquitin-like domain is found at 3–81; the sequence is VSVIIKWGGQ…IMMMGTREES (79 aa). One can recognise an FCP1 homology domain in the interval 133-294; the sequence is PRPGKRLLVL…YKLSQYLKEI (162 aa). 3 residues coordinate Mg(2+): D143, D145, and D253.

Requires Mg(2+) as cofactor.

It is found in the nucleus. It catalyses the reaction O-phospho-L-seryl-[protein] + H2O = L-seryl-[protein] + phosphate. The catalysed reaction is O-phospho-L-threonyl-[protein] + H2O = L-threonyl-[protein] + phosphate. Functionally, dephosphorylates 26S nuclear proteasomes, thereby decreasing their proteolytic activity. Recruited to the 19S regulatory particle of the 26S proteasome where it dephosphorylates 19S component psmc2 which impairs psmc2 ATPase activity and disrupts 26S proteasome assembly. Has also been reported to stimulate the proteolytic activity of the 26S proteasome. The chain is Ubiquitin-like domain-containing CTD phosphatase 1 (ublcp1) from Danio rerio (Zebrafish).